The chain runs to 224 residues: Cytidylate kinase (224 aa).

Gly9 to Thr17 contacts ATP.

It belongs to the cytidylate kinase family. Type 1 subfamily.

It is found in the cytoplasm. The catalysed reaction is CMP + ATP = CDP + ADP. It carries out the reaction dCMP + ATP = dCDP + ADP. The polypeptide is Cytidylate kinase (Dichelobacter nodosus (strain VCS1703A)).